The chain runs to 268 residues: Tryptophan synthase alpha chain (268 aa).

Residues Glu49 and Asp60 each act as proton acceptor in the active site.

This sequence belongs to the TrpA family. As to quaternary structure, tetramer of two alpha and two beta chains.

It catalyses the reaction (1S,2R)-1-C-(indol-3-yl)glycerol 3-phosphate + L-serine = D-glyceraldehyde 3-phosphate + L-tryptophan + H2O. The protein operates within amino-acid biosynthesis; L-tryptophan biosynthesis; L-tryptophan from chorismate: step 5/5. In terms of biological role, the alpha subunit is responsible for the aldol cleavage of indoleglycerol phosphate to indole and glyceraldehyde 3-phosphate. In Escherichia coli (strain SMS-3-5 / SECEC), this protein is Tryptophan synthase alpha chain.